The sequence spans 629 residues: uncharacterized protein (629 aa).

Residues 1-11 (MSDDQQNGKQN) show a composition bias toward polar residues. Disordered stretches follow at residues 1-24 (MSDD…EQDD), 62-87 (SNNN…SNYN), 197-464 (SEES…SSLI), and 493-560 (PTPT…STPD). Over residues 247–264 (PSSSSSSSSLINSPTTSK) the composition is skewed to low complexity. The span at 274 to 288 (PTINPKSLFGLSSTI) shows a compositional bias: polar residues. Over residues 294–430 (VKTEKEKEKE…DETLNKETPH (137 aa)) the composition is skewed to basic and acidic residues. Low complexity-rich tracts occupy residues 434-464 (PHIT…SSLI) and 493-554 (PTPT…NNNN).

This is an uncharacterized protein from Dictyostelium discoideum (Social amoeba).